A 341-amino-acid chain; its full sequence is L-threonine 3-dehydrogenase (341 aa).

C38 is a binding site for Zn(2+). Residues T40 and H43 each act as charge relay system in the active site. The Zn(2+) site is built by H63, E64, C93, C96, C99, and C107. NAD(+) contacts are provided by residues I175, D195, R200, 262–264, and 286–287; these read LGI and IY.

It belongs to the zinc-containing alcohol dehydrogenase family. As to quaternary structure, homotetramer. The cofactor is Zn(2+).

Its subcellular location is the cytoplasm. It carries out the reaction L-threonine + NAD(+) = (2S)-2-amino-3-oxobutanoate + NADH + H(+). It participates in amino-acid degradation; L-threonine degradation via oxydo-reductase pathway; glycine from L-threonine: step 1/2. Its function is as follows. Catalyzes the NAD(+)-dependent oxidation of L-threonine to 2-amino-3-ketobutyrate. This Shewanella woodyi (strain ATCC 51908 / MS32) protein is L-threonine 3-dehydrogenase.